The following is a 211-amino-acid chain: Riboflavin kinase (211 aa).

An H-T-H motif-like region spans residues 1–81 (MKCIDRRLIG…DLLRYFNILS (81 aa)). The riboflavin kinase stretch occupies residues 82 to 211 (IRLSGRVVSG…DRVEIEIYLE (130 aa)). Residue 91 to 96 (GLGEGA) coordinates CDP. Residues Thr-120 and Asn-122 each coordinate Mg(2+). Thr-177 and Glu-185 together coordinate FMN. A CDP-binding site is contributed by 190 to 193 (FKLR).

Belongs to the archaeal riboflavin kinase family. The cofactor is Mg(2+).

It carries out the reaction riboflavin + CTP = CDP + FMN + H(+). It functions in the pathway cofactor biosynthesis; FMN biosynthesis; FMN from riboflavin (CTP route): step 1/1. In terms of biological role, catalyzes the CTP-dependent phosphorylation of riboflavin (vitamin B2) to form flavin mononucleotide (FMN). This is Riboflavin kinase (ribK) from Pyrobaculum islandicum (strain DSM 4184 / JCM 9189 / GEO3).